Consider the following 326-residue polypeptide: Phenylalanine--tRNA ligase alpha subunit (326 aa).

Position 251 (glutamate 251) interacts with Mg(2+).

It belongs to the class-II aminoacyl-tRNA synthetase family. Phe-tRNA synthetase alpha subunit type 1 subfamily. In terms of assembly, tetramer of two alpha and two beta subunits. Mg(2+) is required as a cofactor.

The protein resides in the cytoplasm. It carries out the reaction tRNA(Phe) + L-phenylalanine + ATP = L-phenylalanyl-tRNA(Phe) + AMP + diphosphate + H(+). The polypeptide is Phenylalanine--tRNA ligase alpha subunit (Pseudoalteromonas atlantica (strain T6c / ATCC BAA-1087)).